The sequence spans 239 residues: Dihydromethanopterin reductase (acceptor) (239 aa).

2 consecutive 4Fe-4S ferredoxin-type domains span residues 144–175 (MPYNIDRKQCKHCETCPPRENCPHEAISEKNG) and 176–205 (VTDQIDLLKCKGCGICKELCPYNAIKGGPV). [4Fe-4S] cluster is bound by residues Cys-153, Cys-156, Cys-159, Cys-165, Cys-185, Cys-188, Cys-191, and Cys-195.

Homodimer. Requires [4Fe-4S] cluster as cofactor.

It catalyses the reaction 5,6,7,8-tetrahydromethanopterin + A = 7,8-dihydromethanopterin + AH2. It participates in cofactor biosynthesis; 5,6,7,8-tetrahydromethanopterin biosynthesis. Functionally, involved in the biosynthesis of tetrahydromethanopterin, a coenzyme used in methanogenesis. Catalyzes the reduction of dihydromethanopterin (H(2)MPT) to tetrahydromethanopterin (H(4)MPT). Ferredoxin may serve as an electron donor. The sequence is that of Dihydromethanopterin reductase (acceptor) from Methanosarcina mazei (strain ATCC BAA-159 / DSM 3647 / Goe1 / Go1 / JCM 11833 / OCM 88) (Methanosarcina frisia).